Here is a 697-residue protein sequence, read N- to C-terminus: Potassium-transporting ATPase ATP-binding subunit (697 aa).

Transmembrane regions (helical) follow at residues 36–56 (VMFV…RDLI), 66–86 (LQII…EAVA), 218–238 (IALN…TATI), and 253–273 (VLVA…LSAI). The 4-aspartylphosphate intermediate role is filled by D306. Residues D343, E347, 376–383 (FTAQTRMS), and K394 contribute to the ATP site. Residues D526 and D530 each coordinate Mg(2+). Helical transmembrane passes span 595-615 (YFAI…QSTG), 631-651 (AILS…PLSL), and 669-689 (LLVY…IIDM).

The protein belongs to the cation transport ATPase (P-type) (TC 3.A.3) family. Type IA subfamily. As to quaternary structure, the system is composed of three essential subunits: KdpA, KdpB and KdpC.

Its subcellular location is the cell inner membrane. It catalyses the reaction K(+)(out) + ATP + H2O = K(+)(in) + ADP + phosphate + H(+). Functionally, part of the high-affinity ATP-driven potassium transport (or Kdp) system, which catalyzes the hydrolysis of ATP coupled with the electrogenic transport of potassium into the cytoplasm. This subunit is responsible for energy coupling to the transport system and for the release of the potassium ions to the cytoplasm. The chain is Potassium-transporting ATPase ATP-binding subunit from Mesorhizobium japonicum (strain LMG 29417 / CECT 9101 / MAFF 303099) (Mesorhizobium loti (strain MAFF 303099)).